Here is a 217-residue protein sequence, read N- to C-terminus: Ribonuclease T (217 aa).

In terms of domain architecture, Exonuclease spans 20-195 (VVVDVETAGF…YDTEKTAELF (176 aa)). Mg(2+) is bound by residues Asp-23, Glu-25, His-182, and Asp-187. His-182 serves as the catalytic Proton donor/acceptor.

This sequence belongs to the RNase T family. Homodimer. Mg(2+) serves as cofactor.

Its function is as follows. Trims short 3' overhangs of a variety of RNA species, leaving a one or two nucleotide 3' overhang. Responsible for the end-turnover of tRNA: specifically removes the terminal AMP residue from uncharged tRNA (tRNA-C-C-A). Also appears to be involved in tRNA biosynthesis. This is Ribonuclease T from Vibrio vulnificus (strain YJ016).